Reading from the N-terminus, the 470-residue chain is MVDTMMNTNTDGVTAVPPIFPLPSTTPNRNNNNELAMLAQKQIVAGLLLQQPTIVQAAVNGTNSQKHLADIDYTNVIQTLQALGTTNLKAFSLLLDPQSQTSQLISEDTRPSASSSPSSTATAVSNSGQSNATSTSSSSTEPEYKPRNVREKVYADGYIMSFDKKSCCGTKEFWRCERKNDCNARMHSDINTREIVRKLHPHNHEKPSPEELAFYEQDFSTLHPNYCHPVKSINRSYMQRKLSRASHVSQALPIAPQQIKAEPMEVDTTNQTIQNFQQNNNLMLLASINAAATAAAAATSAGISPPVVGQKRVSTTVMPITLKSQRTTPKEEEDSSQLMSQEEFRITYELTKKLMEMMKPKTEIGVRWQGDEGSILLFLSHDNGAEENVFFPVVVMNRDEKSLITALEGFTGKRCEGKLALCYSQRVNVLVHEALISNWTHGKLFLVNTDAPALWRLTPVDAFGEPLNHV.

Residues 102–148 (SQLISEDTRPSASSSPSSTATAVSNSGQSNATSTSSSSTEPEYKPRN) are disordered. A compositionally biased stretch (low complexity) spans 111–140 (PSASSSPSSTATAVSNSGQSNATSTSSSST). The FLYWCH-type zinc finger occupies 145 to 204 (KPRNVREKVYADGYIMSFDKKSCCGTKEFWRCERKNDCNARMHSDINTREIVRKLHPHNH).

Probable transcription factor. May bind to the promoters of target genes, including micro-RNA genes, in order to repress expression, and acting redundantly with flh-1 and flh-3. In Caenorhabditis elegans, this protein is FLYWCH transcription factor 2.